The following is an 82-amino-acid chain: Putative membrane protein insertion efficiency factor (82 aa).

The segment at 63–82 (PGGHDPVPESTILSKEKSVK) is disordered.

It belongs to the UPF0161 family.

It is found in the cell inner membrane. Could be involved in insertion of integral membrane proteins into the membrane. The sequence is that of Putative membrane protein insertion efficiency factor from Protochlamydia amoebophila (strain UWE25).